Reading from the N-terminus, the 195-residue chain is 3-isopropylmalate dehydratase small subunit (195 aa).

Belongs to the LeuD family. LeuD type 1 subfamily. In terms of assembly, heterodimer of LeuC and LeuD.

The catalysed reaction is (2R,3S)-3-isopropylmalate = (2S)-2-isopropylmalate. It participates in amino-acid biosynthesis; L-leucine biosynthesis; L-leucine from 3-methyl-2-oxobutanoate: step 2/4. In terms of biological role, catalyzes the isomerization between 2-isopropylmalate and 3-isopropylmalate, via the formation of 2-isopropylmaleate. The sequence is that of 3-isopropylmalate dehydratase small subunit from Salinispora tropica (strain ATCC BAA-916 / DSM 44818 / JCM 13857 / NBRC 105044 / CNB-440).